A 434-amino-acid polypeptide reads, in one-letter code: Histidine--tRNA ligase (434 aa).

The protein belongs to the class-II aminoacyl-tRNA synthetase family. As to quaternary structure, homodimer.

It is found in the cytoplasm. It carries out the reaction tRNA(His) + L-histidine + ATP = L-histidyl-tRNA(His) + AMP + diphosphate + H(+). This is Histidine--tRNA ligase from Latilactobacillus sakei subsp. sakei (strain 23K) (Lactobacillus sakei subsp. sakei).